The following is a 157-amino-acid chain: Aspartate carbamoyltransferase regulatory chain (157 aa).

Cys-108, Cys-113, Cys-138, and Cys-141 together coordinate Zn(2+).

This sequence belongs to the PyrI family. Contains catalytic and regulatory chains. Zn(2+) serves as cofactor.

Involved in allosteric regulation of aspartate carbamoyltransferase. The polypeptide is Aspartate carbamoyltransferase regulatory chain (Korarchaeum cryptofilum (strain OPF8)).